A 591-amino-acid chain; its full sequence is MISWHELYMVLSAVVPLYVAMMVAYGSVRWWGVLTPEQCSGINRFVAVIAVPLLSFHFISSSDPYAMNLRFVAADTLQKVLVLAALAAWSRFPARFVPPAWPPLDCSITLFSVSTLPNTLVMGIPLLVSMYGPYSGDLMVQIVVLQSIVWYTLLLFLFEFRAARVLIAAQFPDTAASIAAVHVDPDVVSLEGSQAEAHAEVAPDGRLRMVVCRSSVSRRSAAAAATPRASNLTGVEIYSISSSRNATPRGSTFTLADIPGHQPPNSALRASSFGAADLFSLHSSSRQHTPRPSSFDEHAAARARASATVAPTNDLKDTHMIEWSSGASAASEVTGLPVFRSGRETRRLVPSDAPSIASSRVIRPPPGATGGERAASFNKAVGGQDELAKLEAGAKTEQQTTAVTTTTKGGGAAGAERARGQQNAPAGVMLRLILTTVWRRLIRNPNTYASLIGLTWSLIAFRFHITMPIIVAKSISILSDAGLGMAMFSLGLFMATQPKIIACGYSVAAASMGVRFFFGPAIMAAASAAVGIRGTLLRIAIVQAALPQGIVPFVFAKEYNLHATILCTLVIFGMLIALPITLVYYIILGLL.

Topologically, residues 1-6 (MISWHE) are extracellular. A helical transmembrane segment spans residues 7 to 27 (LYMVLSAVVPLYVAMMVAYGS). The Cytoplasmic portion of the chain corresponds to 28–38 (VRWWGVLTPEQ). The chain crosses the membrane as a helical span at residues 39-59 (CSGINRFVAVIAVPLLSFHFI). V51 lines the (indol-3-yl)acetate pocket. The Extracellular segment spans residues 60 to 70 (SSSDPYAMNLR). Residues 71–93 (FVAADTLQKVLVLAALAAWSRFP) form a helical membrane-spanning segment. The Cytoplasmic portion of the chain corresponds to 94–107 (ARFVPPAWPPLDCS). Residues 108–128 (ITLFSVSTLPNTLVMGIPLLV) form a helical membrane-spanning segment. Positions 118 and 120 each coordinate (indol-3-yl)acetate. Topologically, residues 129-137 (SMYGPYSGD) are extracellular. A helical membrane pass occupies residues 138–158 (LMVQIVVLQSIVWYTLLLFLF). A (indol-3-yl)acetate-binding site is contributed by Y151. Over 159–450 (EFRAARVLIA…LIRNPNTYAS (292 aa)) the chain is Cytoplasmic. Composition is skewed to polar residues over residues 243 to 254 (SRNATPRGSTFT) and 283 to 292 (SSSRQHTPRP). 4 disordered regions span residues 243–269 (SRNA…SALR), 283–313 (SSSR…APTN), 344–374 (ETRR…GERA), and 392–420 (AGAK…RARG). The segment covering 395-407 (KTEQQTTAVTTTT) has biased composition (low complexity). The chain crosses the membrane as a helical span at residues 451 to 471 (LIGLTWSLIAFRFHITMPIIV). The Extracellular portion of the chain corresponds to 472-474 (AKS). A helical membrane pass occupies residues 475–495 (ISILSDAGLGMAMFSLGLFMA). At 496–511 (TQPKIIACGYSVAAAS) the chain is on the cytoplasmic side. A helical membrane pass occupies residues 512–532 (MGVRFFFGPAIMAAASAAVGI). Over 533–535 (RGT) the chain is Extracellular. The chain crosses the membrane as a helical span at residues 536–556 (LLRIAIVQAALPQGIVPFVFA). Residues I550 and V551 each coordinate (indol-3-yl)acetate. Residues 557 to 568 (KEYNLHATILCT) are Cytoplasmic-facing. Residues 569 to 589 (LVIFGMLIALPITLVYYIILG) traverse the membrane as a helical segment. Topologically, residues 590–591 (LL) are extracellular.

This sequence belongs to the auxin efflux carrier (TC 2.A.69.1) family. As to quaternary structure, homodimer. Expressed in stem bases and leaves.

The protein localises to the membrane. May act as a component of the auxin efflux carrier. This is Probable auxin efflux carrier component 3b from Oryza sativa subsp. japonica (Rice).